A 59-amino-acid polypeptide reads, in one-letter code: Potassium channel toxin alpha-KTx 4.1 (59 aa).

The N-terminal stretch at 1-22 is a signal peptide; it reads MKAFYGILIIFILISMIDLSKQ. Disulfide bonds link Cys-29/Cys-50, Cys-35/Cys-55, and Cys-39/Cys-57. The tract at residues 48 to 55 is interaction with Ca(2+)-activated K(+) channels; sequence GKCMNGKC.

The protein belongs to the short scorpion toxin superfamily. Potassium channel inhibitor family. Alpha-KTx 04 subfamily. As to expression, expressed by the venom gland.

Its subcellular location is the secreted. Potently blocks Kv1.1/KCNA1 (85%), Kv1.2/KCNA2 (91%), Kv1.3/KCNA3 (89%), Kv1.6/KCNA6 (94%), and Shaker (97%). This is Potassium channel toxin alpha-KTx 4.1 from Tityus serrulatus (Brazilian scorpion).